Consider the following 56-residue polypeptide: Protein YqiD (56 aa).

A helical transmembrane segment spans residues 2-22; that stretch reads FIAWYWIVLIALVVVGYFLHL.

The protein resides in the cell inner membrane. This Escherichia coli (strain K12) protein is Protein YqiD.